Consider the following 308-residue polypeptide: MAHLLTLSELSLSEINRLLDEAETFRNGRPWHPATPMYVANLFFEPSTRTKCSFEMAERKLGLHVIPFDPERSSVQKGETLYDTVKTLEAIGVDAVVIRHHEDAYFEALRHSVGVSIINAGDGCGHHPTQSLLDLLTIRQEFGTFAGLTVVIIGDIRHSRVARSNAEVLTRLGANVLFSGPPEWEDDMNLHGTYVEIDEAIARADVVMLLRIQHERHAEKMGLTKEEYHQQYGLTLERAQLMKPGAIILHPAPVNRGVEIASQLVEAKPSRIFKQMENGVYVRMAVLKRAIEGRMQHGHVVEKWHVVQ.

Residues Arg-49 and Thr-50 each coordinate carbamoyl phosphate. Lys-77 provides a ligand contact to L-aspartate. Residues Arg-99, His-127, and Gln-130 each contribute to the carbamoyl phosphate site. L-aspartate is bound by residues Arg-160 and Arg-211. Positions 252 and 253 each coordinate carbamoyl phosphate.

Belongs to the aspartate/ornithine carbamoyltransferase superfamily. ATCase family. Heterododecamer (2C3:3R2) of six catalytic PyrB chains organized as two trimers (C3), and six regulatory PyrI chains organized as three dimers (R2).

The enzyme catalyses carbamoyl phosphate + L-aspartate = N-carbamoyl-L-aspartate + phosphate + H(+). Its pathway is pyrimidine metabolism; UMP biosynthesis via de novo pathway; (S)-dihydroorotate from bicarbonate: step 2/3. Functionally, catalyzes the condensation of carbamoyl phosphate and aspartate to form carbamoyl aspartate and inorganic phosphate, the committed step in the de novo pyrimidine nucleotide biosynthesis pathway. In Geobacillus thermodenitrificans (strain NG80-2), this protein is Aspartate carbamoyltransferase catalytic subunit.